A 525-amino-acid polypeptide reads, in one-letter code: Anti-silencing protein 2 (525 aa).

The tract at residues 467–525 (LPRVPTDSPQLPSKDKSQETAKKDDRPKLVANEPVTLDTSTPPVAQSLADSKHCSGLHK) is disordered. Over residues 479-494 (SKDKSQETAKKDDRPK) the composition is skewed to basic and acidic residues.

Functionally, derepression of silent mating type loci when overexpressed. The protein is Anti-silencing protein 2 (ASF2) of Saccharomyces cerevisiae (strain ATCC 204508 / S288c) (Baker's yeast).